The sequence spans 179 residues: Ribulose bisphosphate carboxylase small subunit, chloroplastic 1/4 (179 aa).

The N-terminal 58 residues, 1-58 (MAASSTMLSSVATAACAAPAQASMVAPFVGLKSTSAFPVTQKPATGLSTLPSNGGRVQ), are a transit peptide targeting the chloroplast.

Belongs to the RuBisCO small chain family. As to quaternary structure, heterohexadecamer of 8 large and 8 small subunits.

It is found in the plastid. Its subcellular location is the chloroplast. RuBisCO catalyzes two reactions: the carboxylation of D-ribulose 1,5-bisphosphate, the primary event in carbon dioxide fixation, as well as the oxidative fragmentation of the pentose substrate. Both reactions occur simultaneously and in competition at the same active site. Although the small subunit is not catalytic it is essential for maximal activity. The sequence is that of Ribulose bisphosphate carboxylase small subunit, chloroplastic 1/4 (RBCS1) from Fritillaria agrestis (Stinkbells).